Consider the following 850-residue polypeptide: DEAD-box ATP-dependent RNA helicase 26 (850 aa).

Disordered stretches follow at residues 60–82 and 106–350; these read TRPE…IRAS and GKFT…ENDE. The segment covering 61-71 has biased composition (basic and acidic residues); it reads RPERSQPEFAR. The residue at position 109 (Thr109) is a Phosphothreonine. Residue Ser110 is modified to Phosphoserine. Composition is skewed to basic and acidic residues over residues 118–140 and 284–299; these read EVVR…EGQS and GRND…REPG. 2 stretches are compositionally biased toward acidic residues: residues 315–325 and 336–350; these read LEEEDSSDDDE and LPSE…ENDE. The Q motif motif lies at 382-410; the sequence is TRFDQFPLSPLSLKAIKDAGFETMTVVQE. Residues 413 to 596 form the Helicase ATP-binding domain; the sequence is LPIILQGKDV…HVALKRDHEF (184 aa). 426-433 contributes to the ATP binding site; it reads AKTGTGKT. The DEAD box signature appears at 544–547; sequence DEAD. A Helicase C-terminal domain is found at 630–777; it reads LLKEHIADNV…IDPEAVKRVQ (148 aa).

Belongs to the DEAD box helicase family.

The enzyme catalyses ATP + H2O = ADP + phosphate + H(+). The protein is DEAD-box ATP-dependent RNA helicase 26 (RH26) of Arabidopsis thaliana (Mouse-ear cress).